Reading from the N-terminus, the 282-residue chain is Bifunctional protein FolD (282 aa).

NADP(+)-binding positions include 165–167 (NRS), Ser190, and Ile231.

The protein belongs to the tetrahydrofolate dehydrogenase/cyclohydrolase family. As to quaternary structure, homodimer.

The enzyme catalyses (6R)-5,10-methylene-5,6,7,8-tetrahydrofolate + NADP(+) = (6R)-5,10-methenyltetrahydrofolate + NADPH. The catalysed reaction is (6R)-5,10-methenyltetrahydrofolate + H2O = (6R)-10-formyltetrahydrofolate + H(+). It participates in one-carbon metabolism; tetrahydrofolate interconversion. Its function is as follows. Catalyzes the oxidation of 5,10-methylenetetrahydrofolate to 5,10-methenyltetrahydrofolate and then the hydrolysis of 5,10-methenyltetrahydrofolate to 10-formyltetrahydrofolate. In Clostridium botulinum (strain Kyoto / Type A2), this protein is Bifunctional protein FolD.